The following is a 284-amino-acid chain: ASC1-like protein 3 (284 aa).

The next 6 membrane-spanning stretches (helical) occupy residues 9–29, 69–89, 108–128, 148–168, 195–215, and 243–263; these read SSFFPLTLVFSVGFFCARFFL, LTYYGSVQAWVLLIIKQEPWS, LMLFYMCQCGFYIYSIFALVA, ILIGYAYLTGFFRIGTIILAL, FGLFALSWLLLRLIYFPFWII, and MLLTLLVFHIYWWKLICLMIM. A TLC domain is found at 60–267; sequence VKFSESIWKL…ICLMIMKQLN (208 aa).

The protein resides in the endoplasmic reticulum membrane. Mediates resistance to sphinganine-analog mycotoxins (SAMs) by restoring the sphingolipid biosynthesis. Could salvage the transport of GPI-anchored proteins from the endoplasmic reticulum to the Golgi apparatus in ceramides-depleted cells after SAM exposure. The sequence is that of ASC1-like protein 3 from Oryza sativa subsp. japonica (Rice).